A 36-amino-acid chain; its full sequence is Photosystem II reaction center protein M (36 aa).

Residues 5–25 (ILAFIATALFILVPTAFLLII) traverse the membrane as a helical segment.

This sequence belongs to the PsbM family. PSII is composed of 1 copy each of membrane proteins PsbA, PsbB, PsbC, PsbD, PsbE, PsbF, PsbH, PsbI, PsbJ, PsbK, PsbL, PsbM, PsbT, PsbX, PsbY, PsbZ, Psb30/Ycf12, at least 3 peripheral proteins of the oxygen-evolving complex and a large number of cofactors. It forms dimeric complexes.

The protein resides in the plastid. It is found in the chloroplast thylakoid membrane. Its function is as follows. One of the components of the core complex of photosystem II (PSII). PSII is a light-driven water:plastoquinone oxidoreductase that uses light energy to abstract electrons from H(2)O, generating O(2) and a proton gradient subsequently used for ATP formation. It consists of a core antenna complex that captures photons, and an electron transfer chain that converts photonic excitation into a charge separation. This subunit is found at the monomer-monomer interface. This is Photosystem II reaction center protein M from Panax ginseng (Korean ginseng).